The chain runs to 394 residues: Fructose-bisphosphate aldolase, chloroplastic (394 aa).

The N-terminal 46 residues, 1–46 (MASASLLKTSPVLDNPEFLKGQTLRIPSVAGVRFTPSGSSSLTVRA), are a transit peptide targeting the chloroplast. Residues arginine 93 and lysine 183 each contribute to the substrate site. Residue glutamate 223 is the Proton acceptor of the active site. The active-site Schiff-base intermediate with dihydroxyacetone-P is lysine 265.

Belongs to the class I fructose-bisphosphate aldolase family.

The protein resides in the plastid. Its subcellular location is the chloroplast. The enzyme catalyses beta-D-fructose 1,6-bisphosphate = D-glyceraldehyde 3-phosphate + dihydroxyacetone phosphate. It functions in the pathway carbohydrate degradation; glycolysis; D-glyceraldehyde 3-phosphate and glycerone phosphate from D-glucose: step 4/4. The protein is Fructose-bisphosphate aldolase, chloroplastic of Spinacia oleracea (Spinach).